Reading from the N-terminus, the 78-residue chain is Large ribosomal subunit protein bL28 (78 aa).

This sequence belongs to the bacterial ribosomal protein bL28 family.

The polypeptide is Large ribosomal subunit protein bL28 (Corynebacterium aurimucosum (strain ATCC 700975 / DSM 44827 / CIP 107346 / CN-1) (Corynebacterium nigricans)).